Here is a 206-residue protein sequence, read N- to C-terminus: ATP phosphoribosyltransferase (206 aa).

The protein belongs to the ATP phosphoribosyltransferase family. Short subfamily. In terms of assembly, heteromultimer composed of HisG and HisZ subunits.

Its subcellular location is the cytoplasm. The catalysed reaction is 1-(5-phospho-beta-D-ribosyl)-ATP + diphosphate = 5-phospho-alpha-D-ribose 1-diphosphate + ATP. It participates in amino-acid biosynthesis; L-histidine biosynthesis; L-histidine from 5-phospho-alpha-D-ribose 1-diphosphate: step 1/9. In terms of biological role, catalyzes the condensation of ATP and 5-phosphoribose 1-diphosphate to form N'-(5'-phosphoribosyl)-ATP (PR-ATP). Has a crucial role in the pathway because the rate of histidine biosynthesis seems to be controlled primarily by regulation of HisG enzymatic activity. This is ATP phosphoribosyltransferase from Campylobacter curvus (strain 525.92).